Reading from the N-terminus, the 208-residue chain is MASSLLAGERLVRALGPGGELEPERLPRKLRAELEAALGKKHKGGDSSSGPQRLVSFRLIRDLHQHLRERDSKLYLHELLEGSEIYLPEVVKPPRNPELVARLEKIKIQLANEEYKRITRNVTCQDTRHGGTLSDLGKQVRSLKALVITIFNFIVTVVAAFVCTYLGSQYIFTEMASRVLAALIVASVVGLAELYVMVRAMEGELGEL.

An N-acetylalanine modification is found at Ala2. Helical transmembrane passes span 146–166 (LVITIFNFIVTVVAAFVCTYL) and 179–199 (VLAALIVASVVGLAELYVMVR).

In terms of assembly, accessory component of the multisubunit proton-transporting vacuolar (V)-ATPase protein pump.

It is found in the cytoplasmic vesicle. The protein localises to the COPI-coated vesicle membrane. The protein resides in the endoplasmic reticulum-Golgi intermediate compartment membrane. Its subcellular location is the endoplasmic reticulum membrane. Its function is as follows. Accessory component of the proton-transporting vacuolar (V)-ATPase protein pump involved in intracellular iron homeostasis. In aerobic conditions, required for intracellular iron homeostasis, thus triggering the activity of Fe(2+) prolyl hydroxylase (PHD) enzymes, and leading to HIF1A hydroxylation and subsequent proteasomal degradation. Necessary for endolysosomal acidification and lysosomal degradation. May be involved in Golgi homeostasis. Binds 20(S)-hydroxycholesterol (20(S)-OHC). This chain is Vacuolar ATPase assembly protein VMA12, found in Homo sapiens (Human).